A 395-amino-acid chain; its full sequence is MTAVFPGELLLAEGIHEIARVTALLSGPLRRAPRVAQVVGPGFAGRPWAPRLTDALRPLDPTVVVHDGPTTPDSVAALARQLRAIRADVAVAIGGGTVMDAAKAAAALADGGPPDADRVRQACAAGPAAGDTPPAVRVVAVPTTAGTGAEATPFATLWDLKHRRKLSLTGPRVRPSAAVLAPELLAGLGRRALATGILDALCQGAEASWSIRSTPESIRWGTSAVTLAAEALDQVQDDAPDAAARLALQRAAHHSGRAIALAQTSSCHAISYPLTLRLGLAHGHACGVTLGRLLRYNHAVPAGDCADPRGTGHVRRVLDALAAPLGGTPARAALRVERFITACGLTPYDALDVDHRSLAAEAVTYPRCHDNPRRLDRESLGRLLGERSEMEETCG.

Residues Asp-199, His-268, and His-282 each contribute to the Fe cation site.

It belongs to the iron-containing alcohol dehydrogenase family. The cofactor is Fe cation.

It carries out the reaction 2-hydroxyethylphosphonate + NAD(+) = phosphonoacetaldehyde + NADH + H(+). It functions in the pathway secondary metabolite biosynthesis; bialaphos biosynthesis. In terms of biological role, catalyzes the reduction of phosphonoacetaldehyde to 2-hydroxyethylphosphonate, a step in the biosynthesis of phosphinothricin tripeptide. Phosphinothricin tripeptide (PTT), also known as bialaphos (BA), is a natural-product antibiotic and potent herbicide. Can use both NAD and NADP but the preferred substrate is NAD. The polypeptide is Phosphonoacetaldehyde reductase (phpC) (Streptomyces viridochromogenes (strain DSM 40736 / JCM 4977 / BCRC 1201 / Tue 494)).